The sequence spans 187 residues: Protein GrpE (187 aa).

The segment at 1–26 (MHDPKESLETNIQETESQEKLPETPI) is disordered.

This sequence belongs to the GrpE family. In terms of assembly, homodimer.

The protein resides in the cytoplasm. Participates actively in the response to hyperosmotic and heat shock by preventing the aggregation of stress-denatured proteins, in association with DnaK and GrpE. It is the nucleotide exchange factor for DnaK and may function as a thermosensor. Unfolded proteins bind initially to DnaJ; upon interaction with the DnaJ-bound protein, DnaK hydrolyzes its bound ATP, resulting in the formation of a stable complex. GrpE releases ADP from DnaK; ATP binding to DnaK triggers the release of the substrate protein, thus completing the reaction cycle. Several rounds of ATP-dependent interactions between DnaJ, DnaK and GrpE are required for fully efficient folding. The sequence is that of Protein GrpE from Dichelobacter nodosus (strain VCS1703A).